A 241-amino-acid polypeptide reads, in one-letter code: Uridylate kinase (241 aa).

Residues 15-18 (KLSG), Gly-58, and Arg-62 each bind ATP. UMP is bound by residues Asp-77 and 138-145 (TGNPYFTT). Thr-165, Tyr-171, and Asp-174 together coordinate ATP.

This sequence belongs to the UMP kinase family. Homohexamer.

The protein localises to the cytoplasm. It carries out the reaction UMP + ATP = UDP + ADP. The protein operates within pyrimidine metabolism; CTP biosynthesis via de novo pathway; UDP from UMP (UMPK route): step 1/1. With respect to regulation, inhibited by UTP. In terms of biological role, catalyzes the reversible phosphorylation of UMP to UDP. The sequence is that of Uridylate kinase from Desulfotalea psychrophila (strain LSv54 / DSM 12343).